The primary structure comprises 217 residues: Secreted RxLR effector protein 147 (217 aa).

Positions 1–23 are cleaved as a signal peptide; the sequence is MRGAFYVTTALLITNSIRTAAEA. The interval 22 to 52 is disordered; that stretch reads EANPPGRQPMSHHDGVVPGKSSPRRFLQGSH. Positions 46 to 67 match the RxLR-dEER motif; sequence RFLQGSHEPHDKFAVSAANEER.

This sequence belongs to the RxLR effector family.

It localises to the secreted. The protein resides in the host nucleus. Its subcellular location is the host cytoplasm. Functionally, secreted effector that completely suppresses the host cell death induced by cell death-inducing proteins. The protein is Secreted RxLR effector protein 147 of Plasmopara viticola (Downy mildew of grapevine).